The primary structure comprises 283 residues: Probable replication-associated protein repA1 (283 aa).

It belongs to the IncFII RepA family.

Functionally, this protein is essential for plasmid replication; it is involved in copy control functions. This chain is Probable replication-associated protein repA1 (repA1), found in Buchnera aphidicola subsp. Schizaphis graminum (strain Sg).